Reading from the N-terminus, the 929-residue chain is Chaperone protein ClpC1, chloroplastic (929 aa).

The transit peptide at Met-1–Met-38 directs the protein to the chloroplast. Residues Phe-95 to Glu-237 enclose the Clp R domain. Repeat regions lie at residues Phe-98–Gly-163 and Phe-173–Glu-237. Positions Leu-257–Pro-504 are i. ATP is bound at residue Gly-302–Thr-309. The UVR domain occupies Glu-511 to Glu-546. The disordered stretch occupies residues Ala-552–Val-571. Positions Lys-553–Ser-562 are enriched in basic and acidic residues. The II stretch occupies residues Val-571–Ser-762. Gly-645–Ser-652 is an ATP binding site. The segment covering Leu-908–Leu-919 has biased composition (polar residues). A disordered region spans residues Leu-908–Ala-929. A compositionally biased stretch (acidic residues) spans Glu-920 to Ala-929.

The protein belongs to the ClpA/ClpB family. ClpC subfamily. As to quaternary structure, homodimer. May form hexamer and interact with Clp core. Interacts (via N-terminus) with CLPS1. Interacts with CLPF. Highly expressed in rosette leaves. Expressed in roots, stems and inflorescences. Expressed in photosynthetic green tissues with high levels in young, developing leaf tissues.

The protein resides in the plastid. Its subcellular location is the chloroplast stroma. The protein localises to the chloroplast membrane. Its function is as follows. Molecular chaperone that hydrolyzes ATP and is associated with the chloroplast protein import apparatus. May function as the motor for chloroplast protein translocation, as translocation requires ATP hydrolysis in the stroma. May interact with a ClpP-like protease involved in degradation of denatured proteins in the chloroplast. Involved in the regulation of chlorophyll b biosynthesis through the destabilization of chlorophyllide a oxygenase (CAO) protein in response to the accumulation of chlorophyll b. Involved in leaf iron homeostasis. The protein is Chaperone protein ClpC1, chloroplastic of Arabidopsis thaliana (Mouse-ear cress).